A 215-amino-acid chain; its full sequence is Large ribosomal subunit protein uL4 (215 aa).

Residues 43–101 (HQRQGTSKTKERGEVRGSGRKLYRQKGTGNARVGDAQSPIRRGGGRAHGARPRDYAHDL) form a disordered region. Residues 50-59 (KTKERGEVRG) are compositionally biased toward basic and acidic residues.

The protein belongs to the universal ribosomal protein uL4 family. Part of the 50S ribosomal subunit.

Functionally, one of the primary rRNA binding proteins, this protein initially binds near the 5'-end of the 23S rRNA. It is important during the early stages of 50S assembly. It makes multiple contacts with different domains of the 23S rRNA in the assembled 50S subunit and ribosome. Its function is as follows. Forms part of the polypeptide exit tunnel. The chain is Large ribosomal subunit protein uL4 from Salinibacter ruber (strain DSM 13855 / M31).